The primary structure comprises 379 residues: Cytokine receptor common subunit gamma (379 aa).

A signal peptide spans 1–22 (MLKPPLPLRSLLFLQLPLLGVG). The Extracellular segment spans residues 23–269 (LNPKFLTPSG…ENIENPENPS (247 aa)). Cysteines 68 and 78 form a disulfide. N-linked (GlcNAc...) asparagine glycans are attached at residues asparagine 77, asparagine 81, and asparagine 90. Residues cysteine 109 and cysteine 122 are joined by a disulfide bond. The Fibronectin type-III domain maps to 163–260 (APENLTLRNL…IHWGSNTSKE (98 aa)). 2 N-linked (GlcNAc...) asparagine glycosylation sites follow: asparagine 166 and asparagine 171. A WSXWS motif motif is present at residues 244–248 (WSDWS). The chain crosses the membrane as a helical span at residues 270 to 290 (LFALEAVLIPLGSMGLIVSLI). Over 291 to 379 (CVYCWLERTM…PPCYTLKPEP (89 aa)) the chain is Cytoplasmic. Positions 299–307 (TMPRIPTLK) match the Box 1 motif motif. Phosphothreonine is present on threonine 305. A disordered region spans residues 349-370 (PPKGGEGPGGSPCSQHSPYWAP).

Belongs to the type I cytokine receptor family. Type 5 subfamily. The gamma subunit is common to the IL2, IL4, IL7, IL15, IL21 and probably also the IL13 receptors. Interacts with SHB upon interleukin stimulation.

It localises to the cell membrane. It is found in the cell surface. Its function is as follows. Common subunit for the receptors for a variety of interleukins. Probably in association with IL15RA, involved in the stimulation of neutrophil phagocytosis by IL15. This is Cytokine receptor common subunit gamma (IL2RG) from Bos taurus (Bovine).